An 814-amino-acid polypeptide reads, in one-letter code: Acyl-coenzyme A dehydrogenase (814 aa).

Glu497 (proton acceptor) is an active-site residue.

Belongs to the acyl-CoA dehydrogenase family. Requires FAD as cofactor.

It carries out the reaction a medium-chain 2,3-saturated fatty acyl-CoA + oxidized [electron-transfer flavoprotein] + H(+) = a medium-chain (2E)-enoyl-CoA + reduced [electron-transfer flavoprotein]. It catalyses the reaction a long-chain 2,3-saturated fatty acyl-CoA + oxidized [electron-transfer flavoprotein] + H(+) = a long-chain (2E)-enoyl-CoA + reduced [electron-transfer flavoprotein]. Its pathway is lipid metabolism; fatty acid beta-oxidation. Its function is as follows. Catalyzes the dehydrogenation of acyl-coenzymes A (acyl-CoAs) to 2-enoyl-CoAs, the first step of the beta-oxidation cycle of fatty acid degradation. Is required for S.typhimurium to utilize medium- and long-chain fatty acids as sole carbon sources for growth. Is needed for bacterial survival during carbone-source starvation. The polypeptide is Acyl-coenzyme A dehydrogenase (fadE) (Salmonella typhimurium (strain LT2 / SGSC1412 / ATCC 700720)).